The following is a 239-amino-acid chain: mRNA turnover protein 4 homolog (239 aa).

The disordered stretch occupies residues 216 to 239; the sequence is QQMGDDLPESAPESEGESEEEDDS. The segment covering 221–239 has biased composition (acidic residues); that stretch reads DLPESAPESEGESEEEDDS. Serine 225, serine 229, and serine 233 each carry phosphoserine.

This sequence belongs to the universal ribosomal protein uL10 family. As to quaternary structure, associates with the pre-60S ribosomal particle. Interacts with MINAS-60 (product of an alternative open reading frame of RBM10).

Its subcellular location is the nucleus. It is found in the nucleolus. The protein resides in the cytoplasm. Component of the ribosome assembly machinery. Nuclear paralog of the ribosomal protein P0, it binds pre-60S subunits at an early stage of assembly in the nucleolus, and is replaced by P0 in cytoplasmic pre-60S subunits and mature 80S ribosomes. The chain is mRNA turnover protein 4 homolog (MRTO4) from Bos taurus (Bovine).